The following is a 316-amino-acid chain: GTPase Era (316 aa).

The Era-type G domain occupies 9–190; sequence RAGFAAIIGA…TAKLVSMMPE (182 aa). Residues 17–24 form a G1 region; the sequence is GAPNAGKS. Residue 17-24 participates in GTP binding; the sequence is GAPNAGKS. The interval 43-47 is G2; sequence QTTRF. Residues 64 to 67 are G3; that stretch reads DTPG. Residues 64–68 and 140–143 each bind GTP; these read DTPGI and NKID. A G4 region spans residues 140–143; that stretch reads NKID. The interval 169-171 is G5; that stretch reads ISA. Residues 221 to 298 form the KH type-2 domain; it reads VHEELPYAAT…HLFLHVKVKE (78 aa).

It belongs to the TRAFAC class TrmE-Era-EngA-EngB-Septin-like GTPase superfamily. Era GTPase family. In terms of assembly, monomer.

It is found in the cytoplasm. The protein localises to the cell inner membrane. Its function is as follows. An essential GTPase that binds both GDP and GTP, with rapid nucleotide exchange. Plays a role in 16S rRNA processing and 30S ribosomal subunit biogenesis and possibly also in cell cycle regulation and energy metabolism. The protein is GTPase Era of Caulobacter vibrioides (strain ATCC 19089 / CIP 103742 / CB 15) (Caulobacter crescentus).